Here is a 178-residue protein sequence, read N- to C-terminus: Probable chorismate pyruvate-lyase (178 aa).

Met37, Arg78, Leu114, and Glu165 together coordinate substrate.

It belongs to the UbiC family.

The protein localises to the cytoplasm. It catalyses the reaction chorismate = 4-hydroxybenzoate + pyruvate. Its pathway is cofactor biosynthesis; ubiquinone biosynthesis. Removes the pyruvyl group from chorismate, with concomitant aromatization of the ring, to provide 4-hydroxybenzoate (4HB) for the ubiquinone pathway. The protein is Probable chorismate pyruvate-lyase of Aeromonas salmonicida (strain A449).